The following is a 1191-amino-acid chain: Probable inositol polyphosphate 5-phosphatase C9G1.10c (1191 aa).

Polar residues-rich tracts occupy residues 1–10 (MASRQGFSNV), 72–101 (QVSS…NPSN), 114–135 (SDSS…SFVS), 151–161 (SFQSSVQSTKG), and 181–193 (NFSS…SPIS). The interval 1-193 (MASRQGFSNV…SKAGSSSPIS (193 aa)) is disordered. S195 is modified (phosphoserine). Disordered stretches follow at residues 205-281 (SQSP…PQPV), 294-334 (SQQL…DASL), and 355-425 (IPEK…SSSS). Over residues 268–280 (TPPPIPSPRPPQP) the composition is skewed to pro residues. The segment covering 302 to 311 (SPRKPPKPPL) has biased composition (basic residues). 3 stretches are compositionally biased toward polar residues: residues 316–334 (TQRS…DASL), 367–382 (HTLS…SENL), and 400–413 (LATN…VSTE). A compositionally biased stretch (low complexity) spans 414 to 425 (QSDPSVAASSSS).

Belongs to the inositol 1,4,5-trisphosphate 5-phosphatase family.

The protein resides in the cytoplasm. This Schizosaccharomyces pombe (strain 972 / ATCC 24843) (Fission yeast) protein is Probable inositol polyphosphate 5-phosphatase C9G1.10c.